Reading from the N-terminus, the 336-residue chain is Sulfate/thiosulfate import ATP-binding protein CysA (336 aa).

The 231-residue stretch at 3-233 folds into the ABC transporter domain; it reads ITIENVSKSF…PASPFVMSFI (231 aa). 35-42 provides a ligand contact to ATP; that stretch reads GPSGSGKS.

It belongs to the ABC transporter superfamily. Sulfate/tungstate importer (TC 3.A.1.6) family. As to quaternary structure, the complex is composed of two ATP-binding proteins (CysA), two transmembrane proteins (CysT and CysW) and a solute-binding protein (CysP).

It is found in the cell inner membrane. The catalysed reaction is sulfate(out) + ATP + H2O = sulfate(in) + ADP + phosphate + H(+). It catalyses the reaction thiosulfate(out) + ATP + H2O = thiosulfate(in) + ADP + phosphate + H(+). Its function is as follows. Part of the ABC transporter complex CysAWTP involved in sulfate/thiosulfate import. Responsible for energy coupling to the transport system. The protein is Sulfate/thiosulfate import ATP-binding protein CysA of Thermosynechococcus vestitus (strain NIES-2133 / IAM M-273 / BP-1).